A 293-amino-acid chain; its full sequence is Bifunctional protein FolD (293 aa).

NADP(+) is bound by residues 164–166 (GRS), Ser-193, and Thr-234.

The protein belongs to the tetrahydrofolate dehydrogenase/cyclohydrolase family. Homodimer.

The enzyme catalyses (6R)-5,10-methylene-5,6,7,8-tetrahydrofolate + NADP(+) = (6R)-5,10-methenyltetrahydrofolate + NADPH. It carries out the reaction (6R)-5,10-methenyltetrahydrofolate + H2O = (6R)-10-formyltetrahydrofolate + H(+). Its pathway is one-carbon metabolism; tetrahydrofolate interconversion. Its function is as follows. Catalyzes the oxidation of 5,10-methylenetetrahydrofolate to 5,10-methenyltetrahydrofolate and then the hydrolysis of 5,10-methenyltetrahydrofolate to 10-formyltetrahydrofolate. In Phocaeicola vulgatus (strain ATCC 8482 / DSM 1447 / JCM 5826 / CCUG 4940 / NBRC 14291 / NCTC 11154) (Bacteroides vulgatus), this protein is Bifunctional protein FolD.